A 110-amino-acid polypeptide reads, in one-letter code: PCNA-associated factor (110 aa).

Lysine 15 is covalently cross-linked (Glycyl lysine isopeptide (Lys-Gly) (interchain with G-Cter in ubiquitin)). Residues 23-34 (RKVLGSSTFVTN) carry the D-box motif. Lysine 24 carries the post-translational modification N6-acetyllysine; alternate. Lysine 24 participates in a covalent cross-link: Glycyl lysine isopeptide (Lys-Gly) (interchain with G-Cter in ubiquitin); alternate. At serine 28 the chain carries Phosphoserine. Positions 29–39 (STFVTNSSGSS) are enriched in low complexity. The tract at residues 29–110 (STFVTNSSGS…QPDHRDDENE (82 aa)) is disordered. Residues 61-71 (QKGIGEFFRLS) carry the PIP-box motif. A Phosphoserine modification is found at serine 71. Basic and acidic residues predominate over residues 71 to 80 (SPKDSKKENQ). The KEN box signature appears at 77–79 (KEN). The Initiation motif motif lies at 84 to 96 (EAGSSGLGKAKRK).

In terms of assembly, interacts (when monoubiquitinated at Lys-15 and Lys-24) with PCNA. Interacts with isoform 2/p33ING1b of ING1. Interacts with BRCA1. Post-translationally, monoubiquitinated at Lys-15 and Lys-24 during normal S phase, promoting its association with PCNA. Also diubiquitinated at these 2 sites. Following DNA damage, monoubiquitin chains at Lys-15 and Lys-24 are probably extended, leading to disrupt the interaction with PCNA. Polyubiquitinated by the APC/C complex at the mitotic exit, leading to its degradation by the proteasome.

The protein resides in the nucleus. It is found in the cytoplasm. The protein localises to the perinuclear region. Functionally, PCNA-binding protein that acts as a regulator of DNA repair during DNA replication. Following DNA damage, the interaction with PCNA is disrupted, facilitating the interaction between monoubiquitinated PCNA and the translesion DNA synthesis DNA polymerase eta (POLH) at stalled replisomes, facilitating the bypass of replication-fork-blocking lesions. Also acts as a regulator of centrosome number. This chain is PCNA-associated factor, found in Rattus norvegicus (Rat).